The sequence spans 272 residues: Indole-3-glycerol phosphate synthase (272 aa).

It belongs to the TrpC family.

It catalyses the reaction 1-(2-carboxyphenylamino)-1-deoxy-D-ribulose 5-phosphate + H(+) = (1S,2R)-1-C-(indol-3-yl)glycerol 3-phosphate + CO2 + H2O. It functions in the pathway amino-acid biosynthesis; L-tryptophan biosynthesis; L-tryptophan from chorismate: step 4/5. The polypeptide is Indole-3-glycerol phosphate synthase (Mycobacterium sp. (strain JLS)).